The chain runs to 62 residues: UPF0434 protein RHE_CH03977 (62 aa).

Belongs to the UPF0434 family.

This Rhizobium etli (strain ATCC 51251 / DSM 11541 / JCM 21823 / NBRC 15573 / CFN 42) protein is UPF0434 protein RHE_CH03977.